The chain runs to 493 residues: Galactose-1-phosphate uridylyltransferase 2 (493 aa).

It belongs to the galactose-1-phosphate uridylyltransferase type 2 family.

The protein resides in the cytoplasm. The catalysed reaction is alpha-D-galactose 1-phosphate + UDP-alpha-D-glucose = alpha-D-glucose 1-phosphate + UDP-alpha-D-galactose. Its pathway is carbohydrate metabolism; galactose metabolism. The protein is Galactose-1-phosphate uridylyltransferase 2 (galT2) of Streptococcus pneumoniae serotype 4 (strain ATCC BAA-334 / TIGR4).